The sequence spans 155 residues: Ribosomal RNA large subunit methyltransferase H (155 aa).

Residues leucine 72, glycine 103, and leucine 122–leucine 127 contribute to the S-adenosyl-L-methionine site.

The protein belongs to the RNA methyltransferase RlmH family. In terms of assembly, homodimer.

It is found in the cytoplasm. The enzyme catalyses pseudouridine(1915) in 23S rRNA + S-adenosyl-L-methionine = N(3)-methylpseudouridine(1915) in 23S rRNA + S-adenosyl-L-homocysteine + H(+). Its function is as follows. Specifically methylates the pseudouridine at position 1915 (m3Psi1915) in 23S rRNA. This chain is Ribosomal RNA large subunit methyltransferase H, found in Histophilus somni (strain 129Pt) (Haemophilus somnus).